The primary structure comprises 3174 residues: Probable polyketide synthase 15 (3174 aa).

The region spanning 23-474 (NDEIAIVGIG…GSNCCLILSQ (452 aa)) is the Ketosynthase family 3 (KS3) domain. Catalysis depends on for beta-ketoacyl synthase activity residues Cys-194, His-342, and His-397. 2 coiled-coil regions span residues 472–509 (LSQFKNNENQQQQQQQQQQQQQQQQQQQQQRGQQQYDN) and 574–604 (EFNKQKQSQKEKEKEKEREGEEKEQLNRVQT). Positions 578 to 599 (QKQSQKEKEKEKEREGEEKEQL) are enriched in basic and acidic residues. Residues 578 to 601 (QKQSQKEKEKEKEREGEEKEQLNR) form a disordered region. Residues 707-740 (GIEASFIVGHSLGEIPAAYCSGMITLDTLCYLIY) are acyl/malonyl transferase. Ser-717 acts as the For acyl/malonyl transferase activity in catalysis. The N-terminal hotdog fold stretch occupies residues 1034–1156 (IDILGLSNYD…ANFQLLNNNN (123 aa)). The PKS/mFAS DH domain maps to 1034–1332 (IDILGLSNYD…CKSLKIVKNP (299 aa)). The active-site Proton acceptor; for dehydratase activity is His-1068. The C-terminal hotdog fold stretch occupies residues 1182-1332 (NKTKISRIDL…CKSLKIVKNP (151 aa)). Residue Asp-1241 is the Proton donor; for dehydratase activity of the active site. A coiled-coil region spans residues 1758 to 1793 (LEININNNNNNNNNNNNNNNNNNNNNNNNNNYEDNV). One can recognise a Carrier domain in the interval 2653–2730 (VDSLNIKDIF…LVIKIIITAI (78 aa)). At Ser-2690 the chain carries O-(pantetheine 4'-phosphoryl)serine.

Requires pantetheine 4'-phosphate as cofactor.

In terms of biological role, probable polyketide synthase. This Dictyostelium discoideum (Social amoeba) protein is Probable polyketide synthase 15 (pks15).